We begin with the raw amino-acid sequence, 122 residues long: Large ribosomal subunit protein uL14 (122 aa).

Belongs to the universal ribosomal protein uL14 family. In terms of assembly, part of the 50S ribosomal subunit. Forms a cluster with proteins L3 and L19. In the 70S ribosome, L14 and L19 interact and together make contacts with the 16S rRNA in bridges B5 and B8.

Functionally, binds to 23S rRNA. Forms part of two intersubunit bridges in the 70S ribosome. This Streptococcus suis (strain 05ZYH33) protein is Large ribosomal subunit protein uL14.